The following is a 692-amino-acid chain: Elongation factor G (692 aa).

A tr-type G domain is found at 8-283 (EMTRNIGIMA…AVLDYMPAPT (276 aa)). GTP contacts are provided by residues 17–24 (AHIDAGKT), 81–85 (DTPGH), and 135–138 (NKMD).

It belongs to the TRAFAC class translation factor GTPase superfamily. Classic translation factor GTPase family. EF-G/EF-2 subfamily.

The protein resides in the cytoplasm. Its function is as follows. Catalyzes the GTP-dependent ribosomal translocation step during translation elongation. During this step, the ribosome changes from the pre-translocational (PRE) to the post-translocational (POST) state as the newly formed A-site-bound peptidyl-tRNA and P-site-bound deacylated tRNA move to the P and E sites, respectively. Catalyzes the coordinated movement of the two tRNA molecules, the mRNA and conformational changes in the ribosome. This Citrifermentans bemidjiense (strain ATCC BAA-1014 / DSM 16622 / JCM 12645 / Bem) (Geobacter bemidjiensis) protein is Elongation factor G.